Consider the following 314-residue polypeptide: tRNA(Ile)-lysidine synthase (314 aa).

37–42 (SGGPDS) lines the ATP pocket.

Belongs to the tRNA(Ile)-lysidine synthase family.

Its subcellular location is the cytoplasm. It carries out the reaction cytidine(34) in tRNA(Ile2) + L-lysine + ATP = lysidine(34) in tRNA(Ile2) + AMP + diphosphate + H(+). In terms of biological role, ligates lysine onto the cytidine present at position 34 of the AUA codon-specific tRNA(Ile) that contains the anticodon CAU, in an ATP-dependent manner. Cytidine is converted to lysidine, thus changing the amino acid specificity of the tRNA from methionine to isoleucine. This Corynebacterium glutamicum (strain ATCC 13032 / DSM 20300 / JCM 1318 / BCRC 11384 / CCUG 27702 / LMG 3730 / NBRC 12168 / NCIMB 10025 / NRRL B-2784 / 534) protein is tRNA(Ile)-lysidine synthase.